A 143-amino-acid polypeptide reads, in one-letter code: Peptide methionine sulfoxide reductase MsrB (143 aa).

Positions 16–139 (DAELRRRLTP…NSAALNFESR (124 aa)) constitute a MsrB domain. The Zn(2+) site is built by C55, C58, C104, and C107. C128 functions as the Nucleophile in the catalytic mechanism.

Belongs to the MsrB Met sulfoxide reductase family. Requires Zn(2+) as cofactor.

The enzyme catalyses L-methionyl-[protein] + [thioredoxin]-disulfide + H2O = L-methionyl-(R)-S-oxide-[protein] + [thioredoxin]-dithiol. This Burkholderia lata (strain ATCC 17760 / DSM 23089 / LMG 22485 / NCIMB 9086 / R18194 / 383) protein is Peptide methionine sulfoxide reductase MsrB.